Here is a 232-residue protein sequence, read N- to C-terminus: Probable proteasome subunit alpha type-5 (232 aa).

This sequence belongs to the peptidase T1A family. The 26S proteasome consists of a 20S proteasome core and two 19S regulatory subunits. The 20S proteasome core is composed of 28 subunits that are arranged in four stacked rings, resulting in a barrel-shaped structure. The two end rings are each formed by seven alpha subunits, and the two central rings are each formed by seven beta subunits. The catalytic chamber with the active sites is on the inside of the barrel.

It is found in the cytoplasm. The protein resides in the nucleus. Functionally, the proteasome degrades poly-ubiquitinated proteins in the cytoplasm and in the nucleus. It is essential for the regulated turnover of proteins and for the removal of misfolded proteins. The proteasome is a multicatalytic proteinase complex that is characterized by its ability to cleave peptides with Arg, Phe, Tyr, Leu, and Glu adjacent to the leaving group at neutral or slightly basic pH. It has an ATP-dependent proteolytic activity. The protein is Probable proteasome subunit alpha type-5 (PUP2) of Encephalitozoon cuniculi (strain GB-M1) (Microsporidian parasite).